Reading from the N-terminus, the 374-residue chain is MANEVIKCKAAVAWEAGKPLSIEEIEVAPPKAHEVRIKIIATAVCHTDAYTLSGADPEGCFPVILGHEGAGIVESVGEGVTKLKAGDTVIPLYIPQCGECKFCLNPKTNLCQKIRVTQGKGLMPDGTSRFTCKGKTILHYMGTSTFSEYTVVADISVAKIDPLAPLDKVCLLGCGISTGYGAAVNTAKLEPGSVCAVFGLGGVGLAVIMGCKVAGASRIIGVDINKDKFARAKEFGATECINPQDFSKPIQEVLIEMTDGGVDYSFECIGNVKVMRAALEACHKGWGVSVVVGVAASGEEIATRPFQLVTGRTWKGTAFGGWKSVESVPKLVSEYMSKKIKVDEFVTHNLSFDEINKAFELMHSGKSIRTVVKI.

N-acetylalanine is present on Ala2. Residues Cys45, His67, Cys97, Cys100, Cys103, Cys111, and Cys174 each coordinate Zn(2+). N6-succinyllysine is present on Lys233. Phosphoserine is present on Ser247. At Lys315 the chain carries N6-succinyllysine. A phosphoserine mark is found at Ser324 and Ser351.

This sequence belongs to the zinc-containing alcohol dehydrogenase family. Class-III subfamily. In terms of assembly, homodimer. Zn(2+) serves as cofactor.

It is found in the cytoplasm. It carries out the reaction a primary alcohol + NAD(+) = an aldehyde + NADH + H(+). The catalysed reaction is a secondary alcohol + NAD(+) = a ketone + NADH + H(+). It catalyses the reaction S-(hydroxymethyl)glutathione + NADP(+) = S-formylglutathione + NADPH + H(+). The enzyme catalyses S-(hydroxymethyl)glutathione + NAD(+) = S-formylglutathione + NADH + H(+). It carries out the reaction 20-oxo-(5Z,8Z,11Z,14Z)-eicosatetraenoate + NAD(+) + H2O = (5Z,8Z,11Z,14Z)-eicosatetraenedioate + NADH + 2 H(+). The catalysed reaction is 20-hydroxy-(5Z,8Z,11Z,14Z)-eicosatetraenoate + NAD(+) = 20-oxo-(5Z,8Z,11Z,14Z)-eicosatetraenoate + NADH + H(+). It catalyses the reaction S-nitrosoglutathione + NADH + H(+) = S-(hydroxysulfenamide)glutathione + NAD(+). Catalyzes the oxidation of long-chain primary alcohols and the oxidation of S-(hydroxymethyl) glutathione. Also oxidizes long chain omega-hydroxy fatty acids, such as 20-HETE, producing both the intermediate aldehyde, 20-oxoarachidonate and the end product, a dicarboxylic acid, (5Z,8Z,11Z,14Z)-eicosatetraenedioate. Class-III ADH is remarkably ineffective in oxidizing ethanol. Required for clearance of cellular formaldehyde, a cytotoxic and carcinogenic metabolite that induces DNA damage. Also acts as a S-nitroso-glutathione reductase by catalyzing the NADH-dependent reduction of S-nitrosoglutathione, thereby regulating protein S-nitrosylation. The protein is Alcohol dehydrogenase class-3 of Homo sapiens (Human).